Consider the following 292-residue polypeptide: Manganese transport system membrane protein MntC (292 aa).

8 helical membrane-spanning segments follow: residues 20–40 (ALTA…FIIL), 58–78 (VVIA…TGVI), 96–116 (SAIG…ITGM), 137–157 (TDLW…ILFY), 168–188 (VMAQ…MLLL), 190–210 (LVTV…MLIT), 226–246 (LCLA…FSVI), and 249–269 (VASG…AFFF).

This sequence belongs to the ABC-3 integral membrane protein family.

It is found in the cell membrane. In terms of biological role, this protein is probably a component of a manganese permease, a binding protein-dependent, ATP-driven transport system. This is Manganese transport system membrane protein MntC (mntC) from Halalkalibacterium halodurans (strain ATCC BAA-125 / DSM 18197 / FERM 7344 / JCM 9153 / C-125) (Bacillus halodurans).